The sequence spans 336 residues: 4-hydroxy-3-methylbut-2-enyl diphosphate reductase (336 aa).

Residue Cys-21 participates in [4Fe-4S] cluster binding. Residues His-50 and His-86 each contribute to the (2E)-4-hydroxy-3-methylbut-2-enyl diphosphate site. Dimethylallyl diphosphate contacts are provided by His-50 and His-86. Residues His-50 and His-86 each coordinate isopentenyl diphosphate. Residue Cys-108 coordinates [4Fe-4S] cluster. (2E)-4-hydroxy-3-methylbut-2-enyl diphosphate is bound at residue His-136. His-136 lines the dimethylallyl diphosphate pocket. His-136 provides a ligand contact to isopentenyl diphosphate. Catalysis depends on Glu-138, which acts as the Proton donor. Thr-177 lines the (2E)-4-hydroxy-3-methylbut-2-enyl diphosphate pocket. Cys-207 contacts [4Fe-4S] cluster. Ser-235, Ser-236, Asn-237, and Ser-280 together coordinate (2E)-4-hydroxy-3-methylbut-2-enyl diphosphate. Residues Ser-235, Ser-236, Asn-237, and Ser-280 each contribute to the dimethylallyl diphosphate site. Positions 235, 236, 237, and 280 each coordinate isopentenyl diphosphate.

This sequence belongs to the IspH family. [4Fe-4S] cluster serves as cofactor.

The enzyme catalyses isopentenyl diphosphate + 2 oxidized [2Fe-2S]-[ferredoxin] + H2O = (2E)-4-hydroxy-3-methylbut-2-enyl diphosphate + 2 reduced [2Fe-2S]-[ferredoxin] + 2 H(+). The catalysed reaction is dimethylallyl diphosphate + 2 oxidized [2Fe-2S]-[ferredoxin] + H2O = (2E)-4-hydroxy-3-methylbut-2-enyl diphosphate + 2 reduced [2Fe-2S]-[ferredoxin] + 2 H(+). It participates in isoprenoid biosynthesis; dimethylallyl diphosphate biosynthesis; dimethylallyl diphosphate from (2E)-4-hydroxy-3-methylbutenyl diphosphate: step 1/1. It functions in the pathway isoprenoid biosynthesis; isopentenyl diphosphate biosynthesis via DXP pathway; isopentenyl diphosphate from 1-deoxy-D-xylulose 5-phosphate: step 6/6. Functionally, catalyzes the conversion of 1-hydroxy-2-methyl-2-(E)-butenyl 4-diphosphate (HMBPP) into a mixture of isopentenyl diphosphate (IPP) and dimethylallyl diphosphate (DMAPP). Acts in the terminal step of the DOXP/MEP pathway for isoprenoid precursor biosynthesis. This is 4-hydroxy-3-methylbut-2-enyl diphosphate reductase from Mesorhizobium japonicum (strain LMG 29417 / CECT 9101 / MAFF 303099) (Mesorhizobium loti (strain MAFF 303099)).